A 157-amino-acid chain; its full sequence is Sorting nexin-3 (157 aa).

Residues 1 to 21 (MSKPFQPISDVINTSPKNKSQ) form a disordered region. The segment covering 11–21 (VINTSPKNKSQ) has biased composition (polar residues). Residues 32 to 152 (NFLEIEVKNP…EFIQNEKWDP (121 aa)) form the PX domain. Residues Arg75, Ser77, Lys101, and Arg117 each contribute to the a 1,2-diacyl-sn-glycero-3-phospho-(1D-myo-inositol-3-phosphate) site.

This sequence belongs to the sorting nexin family.

The protein localises to the cytoplasm. It localises to the golgi apparatus membrane. It is found in the prevacuolar compartment membrane. Its function is as follows. Required for retention of late Golgi membrane proteins. Component of the retrieval machinery that functions by direct interaction with the cytosolic tails of certain TGN membrane proteins during the sorting/budding process at the prevacuolar compartment. Binds phosphatidylinositol 3-phosphate (PtdIns(P3)). This Candida albicans (strain SC5314 / ATCC MYA-2876) (Yeast) protein is Sorting nexin-3 (SNX3).